The primary structure comprises 6668 residues: MVTQFHPVRPPVRATVTAVSSPAFSPPSSIPSDGLPGRLSVPETSRPFDPSVSDFALSGRSQAAVDADSGVPERHPDAARMAYRAEQSTGDYGSSSAYALARERRRQLRGRSRPASGEGRGTILRNALPRASSCTPPVLSSGSVPQSAQQRPAASLVSWKAGRFSGNVSRRCVACSAGDQDRVASDSRGDAALHSAALHRPASVSPQRTRAATGAKAVAFPLDAPDAGGPGLCTPQTGSGLEVSGHGKRRLSFQQDFTCGIERTLLPHLALPSVDVSSRGFPGRETTVWQDQAVGGRSDEAEEMDLNSGAGVTDRFYVSPQKWRCSQAAARTASAPRSVTTAGRGTSLASSVSESQSQLLPASPGASSVAACTPEEDALRALQREQQQDLFAALLRSRQARLATTPGASDVWTEERNLQRGEKEGALRPPHPSSAADSGVSTGDRLEGGFPKTDAPRTAQTPGRAFFDVAAEQVVFYQRQAELFRAKYEDAERRCAERDAAVHERDVKIQFLQAQIAALTHQVQTLQHPERGNVTDRAEEKALPQLVDPPAEETEEAVVVSKAFHEAQLARAREETKTLRQKIAALQQDIRPAVVSPSQPSTRPSSETAVTRGDRETANDKRHDTRSEDERTRELTERLQAALAVNESLREELLEARQQLSLLRASSGTPSAFPVAESPQTGALKASFSSSPALSGPGAAGAFSAPDAPKLEVSFLPNVSRASDSSRRATSLSNLPSVEGCRSREKSPEDLLLSSSSGGFSRPHNLALRRELAVRRRLNAQRKQRCLELEQQVHVLASSLEVAREQARAAESVGLSLSQQLQTQTEEARCLQRRTAEAGKLLRVVQERLETGERFVAVLREQREEYKALHEHHTECLEENRRLRASIERLETERMSLLERTEKSRVEFLALVAEKGRSDKQARDALQRLAEAESQQERSTQALKLHAQDLEERLAKKEEQVRSLRGELEAAIVRAEAAEREFSRLRSSLSLASGPADFAAGFPAFSSEEASTVAASEEHSKHAKEAQLQLVLLLAECAEESLRMSAQREKQLSREVTELERQLDRALQTMDEASEQAEALLADHEAAGAVYIQPAYTAGETLFWTSQQLLDVLQNRANWADLARGLEQRELELEARLLFAHQQNDGLHDEARRLETRLQKSEQRTLWIASQFLALMDRGNSEAEDSCESKEEDAQFAQQMSSVRESEARRQRSLLEEEKMETERAALLQRLARESSRASATEQANWHLESRVEDLRVALAEITAERDSVSAELAEEKATARDLAERLQVSEAALERLKKREREAVSRDFFCGSEADSHAVGAAEGSGRSPTHLESLVQQRDELQEMCQELAQRLEAMTRGMTRQQEERAANEERVERETRELHARWKRAASDCESLAQQKAELETQLQDLSENCAAAEVAYRDLEKKWMEEREAHNRLDDEDRRSGREVRLSRRERRLARRRRGGVSDEEARPRDGASSLQSSLSSLSPFEEDGSELARRRPAAEEAVERETNLKKELEAAHQQKNEAEEMCKELGTQLAVLTTLLEAATKEKEDLVAAANRGHKGPVSEQESPSEEKSDLRRDNGDSELVESREALLEKLHAREEELGEARRALLLEKETKAQLEEQLAVETRKREMQHQASEEAKEREEREREEKARQAADLAADLARANSELTSMREKLAASEVARAALEKAEVAREETTKLSLQQQSEKEEMRQMAAAEVADLRNTLASTQEELATLRGRLQEWEATATTPGRLAEELQELRRVVDFQEVEKQQLLESLREWEEKEEEHQAAMKEFEGSYVALQREAFDARAQLQRMIRVVEEHKRRRLRALQEKKRGAGGASQQEEKSAGEGASEETGSDFGEAGEASAEATPRGLEAAVSEVELQAAEDHDILVGRVEELERMQTELEEQRRMLTKHLQQTTEKLQEQCQTTSELQTRCVQLADALEKARAYGATEKHGETPGACESGEETLRQRLASAEEELDRLRREKEELASREETARGQEQAFEVELAKARREAEDKAEIHISEIQQFYEALQAKMERAHAEAENALTTEVQALRSEVQRLKALAAAQTEPTLDQRQDEFEREREKELEREKELERVVAELEREREEKARREAAHEREVAKTRQEAEAAAEMRVSEIQDFFQKLQDHMTQSHAQAKSELLARVAVLEKEVADLREQTPKEQRESGTFQLEVKEIGRKEDEMEDAEVERMGAKQSGDKQTAYYEFERSVGEAEPASRAHEESPEAEGRLERSAEAFEDAAASPQESPFYACSPCSSFSSVREFPEELAAEDENGLAETLRREVEQLHAQCRTLRERVAALEKAAEDKGNLLAKTEDEKRDVEEQLRQTVARVKDQADRLARMSQQCSMRGQELQDLQRREVQLRRQVEEQEEKQREQNARMLQQNEERHEALLAKHSAEQRLTLQREQLAGEERRRQAAEAHAEELLERLETVQKKLLESENEKAQVSLSEARLREELDRVQMAHERERERERQAERAREEKQQRRVEGLQRAKRETDDRLAELLGRAEEQEDRVRTLERQEALLRREVAEQKTQLSLREKELEEQKASREDAKKEFAAALARQETRHEQFLHARLEEERARAEEDVMTLRGLLNEQRDAQKQMETNFRRQLERQVQAARQLDASLQECEDEEEKRVEKFNATTRELQAVVERYNATLEELTAVSEERDNLRLKLAELQSEVSEIRREARDLQAAHLEKEERDRRQWEAAENLQSELEKEVRRLTEERSHALERERREREELERMHREADAARAEEARERLREREEWEARCREKEEMAAEKASLLESCEKRLGQLQEETRRREEAAQRREDEREKEREKRLRDYEGEVHELHLKLHQRRIQEEEKLHEIREKQRDLEHELFSTQQKLQVAQRHREEAEAAAAAAERARTLCEGLLAEERGAAKKAREEQNALAEQVKRLDRENEEKSRKLQDQQLKFSQHLAVAAEESEAKEAEKQREAATINALRDEVQSMQEQLNKEKGEVSSLRRELVNAKAAHADAVERQGEAEKTRDENQQQVSRLKTTLEEVERRLQSIKTQLTETQEKLEGERERVRAAEDRQIQLERYIKELEAQERDAREAGAAATRAKEQALQEERDRSDDDRMRLLAELRRCEEEKRRVEDELQARKAEQEAERERLEVELQRREEEILGLQEECDRRREETIGEMAANREEQEALRGELKHLKDRVDHGEAKAAALTQHLEAAESEKRHVQRELESRGEELEQLRIAKSRVETDFSRLKMEVEAERERNQSQRTFWEQVVDGSHKRQQELQELLDQREAKSEAAETAWRAKTESLQATVATLEEKLKEKERHLSSLEKELADTRESLGRSCSAVTAELHAKERSYEAQVAQLQEESRSIKRALESALADCRRQAEAHEQMLRETLGETQNQAQSLQRQLELSRAELTGRERAWQSAEQQSREETTVLRNRCGALEAELRVQETRAQGLEQENRQLHAREEATRQELEGVLQREAEMQRRFQQTWTEAHMSTEELLVQLQREEQKNRLELRMAEQRMQELQQIREREVTEWARERSRLQADCEKRQRDAADASKQLAEAQLAAALAKEELCRVQDELTVLRVKDEALQRQFLSLAASSSGVLGSTGVSLSGGREKGRNNLSHDEAHAAERAETSLASVRTLTEQRCQALEAALKTASESRDRNAQHCASLRRELAELTRDVQREKEEGEMKTSELEKAHRRIEKLLAVQEETRAQAAELHRRCREYQVKVEEMLREREREERRRDDPGDEERRSRSVARASAEGRNDATEEAGNRGERSSRVPQTRFQNEGFAASERAAHAEETDSLQGSRASLLARQSLAFQKQTEMLQAVIEELGRKLQNQQEQQLLLLTHGHRSAEAAREEREREERERERRVRLLEQRCQDGEIEREALKAELQRAELGSSEAQKQKEDVEREVRRLQILSENLQRRLSKVEAERDSQESAERRSEREQTQREQELLEALQERDIQQRVQESYLERIRGAVEELKAALKQTRREKDASEHRVLLLRRQIEETTALQRERDGAFALLQREVDEAREGREKLEAEVESEKAKRQKVELQKDDLEKTFELDRAALDEECRALQSSLETLRGRLQVQEETKRLVEAEAQRWASQCRETQAALGEEREKGELQEKERGEERRKLLGQLEDEREARARLEQRCADLEKERQREQEERARETERQQEEIERFKARLAESRTAWEDRCRDLNDDLIQVRRQWRETQADLEKALRGQEEETRQREEAERERDAETRRAAEAIAAVARLQAERRTEQATDAAERQQKATLSGKQGEEREARQEEQALKRHELAVSGTREGEELERLKKTLQAVIDNRDRLQSEWLHLRQESEASRSDLTAARNRCLQLEEQVRSVTQELRDCQRALRAADSEKTTQTEKLDRLHMSLERERRAREETLDRLVGLEREVSRMQREKEESMHRLHTAERERESLALSLTALRERERQSRRASGDEAEMERGWQAEKAESLVYLETLEKQLKATEASLARIREDRDRMQRALVDAEERLAEELERTRRRERGEDPRVSDSSPSEAVTTLAAEVDHTQRMLEQARERTAALEKELAASYRQRETDSERVALLRAQLEAQRRSVEDADAAKEKLSSRLEECMRQEAFATAALEAERKLNSRLKEQCLQMETELAETGRRRLRAEADATQGEARLRDVESLLHTAREQLQARTEQEDRLREELERQEEEMAALKATRDEQQLVVERLERQLQTEQQLREREQQLQEREKKLRERESAEVSETDRLVREIQHEAEREKRELMKALEERDDRLRHLEAEVQATRRDLAETRERGKQERSVEEEKLRKRLSYLKEVQERTAQENDEKSRRLRQFEQADATLRSELQEREERLVALERARAALEAKLAETEEVVVSLRREVASSRKKLENERERSGVLRYEEEALRTQIKETEKVQRENEALKESLQTQRAQLHALEKRTRQRDQENQSLETKVASLQKEVRRLNEAYAAQVEKLKKDAERLYSELEQSETQRVSAQDASVELEAQLAAGATRWRASEARLEKAERALEDFRRRQQQGRSHLTRTQAILEGLLTVPLLPPTSPSSSSSSALANEDKKPREVVSPSASREEALLTLAEKLREERRDAVASIREREGARRRSLASLGQELEEERWQVKQLQELLKEVDSARKEALEQETLQTREIDKLRSALAKAAVASEERERTLLRLEEKLAEERRGRQALAEELQRQRSSSSAVSRDGGREETSENCFEKTSASDREAARLRADEGLARDQTLREKEADCAELQQHLERLRGKVAELREGKRALERQVGRLDSKLHAAQEEKTQLTEALEAAAKEKRDLERKAAGSATHARDLQTECLALQRQLEEVAERQALARSQSQGADEERQRLEETVAETVGRAKRAEEAVEELTGEIQGLRRERQRLQEALGRKERTEKKLENAVQALEERLSRMHRQSASEGYEGGEGGRGEGSEPAALPTLEARLQRATEESERQARAQRALEEELFESKKLHAEERERLVQENLELNERVAYLQSRCRHLEADLDALRRTAENVQARLADRAEAETVGETKPEERVDLRKELEAANRARERLEREERRLQAHLEDSQKALAVQKRRQEDQEEMVAGLKSRVEEVQKTLRKREEELAVALARLTGKESELECAANEVKDLQKAAESVQSRLSSLEETKRQLEEKNNLLQAQVDRQHRVLSGLRGNVEASVEHNGETGEGEHASTARQERRAREELENDLRRLDEVCEQLQREKSQQESVAKAKTRELDALQRSFKLEVCALQEDAAKLQAMRAGLESQCEEAQQTVREMEERVRELTRENHLLQRALERAEEECSQWKARMRASRSDVSETRETSDEGQEGPDLARRQCTRARRDGEAADAPGEVQREEDTGRTQALRQWIDRLEEKLQKAEREEQGLKRELNGATRRAEELQRALEQGVEKFDELVARNEELKRKWAEDRCSWAAQRKREVEEHNKEATQLREECMALEKENRVFQQELDRQAGDLKTLHEKALRLADRNAHLQAELAKQQDAASAVAPLEKEISALQEEMEMREAAARDTEADLEAYRLKNRELEAEVASLWRQIAEERGERELVESDNVMLASHQNRDQKLRYTEVLKKQLDSERSARLRLQRDANRLRVETFSLRPLLRLLAGETVGDILVKDFGRGGGSEKKDSLQASRGVAGTSLAASILDASQNSAAAVLSASRRILRCSRPGLRHSRSVSIGRRGGAVLPARSLSLSARSEKPTVALAVRDRVGDAFPVYRQLRVLHRSLSFVMNEFISFLALLQDVLKDEDLLDRLLGVLPAASTFVVSALPPSQGRQDLPPQLSHADAEDLPGLSLSQLDEGRPTETLEARRHQFFSLVSALKQQLRVKLVAHPAASVPSVSVSPSAHGLAASSSPYSPIPGGKRGDGSQGEASRRQRQLSLLAEPRGLAGDSTHRGELPLATLEEDVQGEASGAPSGSLSLDPLAGSSLVVSAREQRDENVSTLSRFSRSRRPEEQGESRRGDAGVSRAGLRSAVSRYEETSREWNPRSSFSLSPSASPGNSNRRLDGSLSEEEQRTEERSSGPGRPAFLQPKGSGAGTAGSGVEERKGEERRSLEESRNTIASSLFSSFASVSSFFESRTGDN.

Coiled-coil stretches lie at residues 562–589, 632–666, 873–988, 1042–1087, 1252–1307, 1333–1427, 1501–1538, 1594–1688, 1896–1930, 1975–2224, 2298–3272, 3298–3436, 3526–3599, 3697–3773, 3856–4137, 4170–4486, 4515–5078, 5165–5202, 5298–5731, and 5927–6119; these read KAFH…LQQD, TREL…LRAS, HTEC…LRSS, LRMS…HEAA, VEDL…AVSR, LESL…LEKK, RPAA…LGTQ, REAL…SEVA, HDIL…TTEK, EETL…AKQS, AEDE…LKME, QQEL…SRAE, LVQL…AKEE, CASL…EERR, TEML…VEAE, RRKL…LRER, LETL…FRRR, LASL…QETL, LREK…QHRV, and TQAL…LWRQ.

Post-translationally, proteolytically cleaved; only the full-length form localizes to the inner core, while processed version also localizes to the outer core during the onset of cell division.

It localises to the cytoplasm. It is found in the cytoskeleton. The protein localises to the microtubule organizing center. Its subcellular location is the centrosome. In terms of biological role, part of the centrosome inner core complex. Required for the linking of centrosomal inner and outer cores. This chain is Centrosome-associated protein CEP250, found in Toxoplasma gondii (strain ATCC 50611 / Me49).